Here is a 312-residue protein sequence, read N- to C-terminus: Olfactory receptor 4F6 (312 aa).

At 1–25 the chain is on the extracellular side; the sequence is MDEANHSVVSEFVFLGLSDSRKIQL. The N-linked (GlcNAc...) asparagine glycan is linked to asparagine 5. A helical transmembrane segment spans residues 26–49; it reads LLFLFFSVFYVSSLMGNLLIVLTV. The Cytoplasmic segment spans residues 50 to 57; it reads TSDPRLQS. The helical transmembrane segment at 58–79 threads the bilayer; it reads PMYFLLANLSIINLVFCSSTAP. Over 80-100 the chain is Extracellular; sequence KMIYDLFRKHKTISFGGCVVQ. Cysteine 97 and cysteine 189 are oxidised to a cystine. A helical transmembrane segment spans residues 101–120; that stretch reads IFFIHAVGGTEMVLLIAMAF. Topologically, residues 121–139 are cytoplasmic; the sequence is DRYVAICKPLHYLTIMNPQ. Residues 140–158 traverse the membrane as a helical segment; sequence RCILFLVISWIIGIIHSVI. The Extracellular segment spans residues 159–195; sequence QLAFVVDLLFCGPNELDSFFCDLPRFIKLACIETYTL. The helical transmembrane segment at 196 to 219 threads the bilayer; it reads GFMVTANSGFISLASFLILIISYI. Residues 220 to 235 are Cytoplasmic-facing; that stretch reads FILVTVQKKSSGGIFK. A helical membrane pass occupies residues 236 to 258; that stretch reads AFSMLSAHVIVVVLVFGPLIFFY. Over 259–269 the chain is Extracellular; sequence IFPFPTSHLDK. A helical transmembrane segment spans residues 270–289; sequence FLAIFDAVITPVLNPVIYTF. The Cytoplasmic portion of the chain corresponds to 290–312; that stretch reads RNKEMMVAMRRRCSQFVNYSKIF.

This sequence belongs to the G-protein coupled receptor 1 family.

It is found in the cell membrane. Its function is as follows. Odorant receptor. This Homo sapiens (Human) protein is Olfactory receptor 4F6 (OR4F6).